A 238-amino-acid chain; its full sequence is Peptidyl-tRNA hydrolase (238 aa).

Tyr-14 provides a ligand contact to tRNA. His-19 functions as the Proton acceptor in the catalytic mechanism. TRNA-binding residues include Phe-64, Asn-66, and Asn-112. A compositionally biased stretch (basic and acidic residues) spans 190–202; it reads KTEEPAPKPEKKT. The segment at 190–225 is disordered; that stretch reads KTEEPAPKPEKKTVAKSHIHQARNHNQPRMPESGPM. Basic residues predominate over residues 203–212; sequence VAKSHIHQAR.

Belongs to the PTH family. Monomer.

Its subcellular location is the cytoplasm. It carries out the reaction an N-acyl-L-alpha-aminoacyl-tRNA + H2O = an N-acyl-L-amino acid + a tRNA + H(+). Functionally, hydrolyzes ribosome-free peptidyl-tRNAs (with 1 or more amino acids incorporated), which drop off the ribosome during protein synthesis, or as a result of ribosome stalling. In terms of biological role, catalyzes the release of premature peptidyl moieties from peptidyl-tRNA molecules trapped in stalled 50S ribosomal subunits, and thus maintains levels of free tRNAs and 50S ribosomes. The polypeptide is Peptidyl-tRNA hydrolase (Rhizobium rhizogenes (strain K84 / ATCC BAA-868) (Agrobacterium radiobacter)).